The following is a 326-amino-acid chain: MDYTHQPALIPCGQDKYMPKSELLLHLKTYNLYYEGQNLQLRHREEEDEFIVEGLLNISWGLRRPIRLQMQDDHERIRPPPSSSSWHSGCNLGAQGTTLKPLTMPTVQISEVDMPVEGLETHSPTDSRGLKPVQEDTPQLMRTRSDVGVRRRGNVRTSSDQRRIRRHRFSINGHFYNHKTSVFTPAYGSVTNVRINSTMTTPQVLKLLLNKFKIENSAEEFALYVVHTSGEKQRLKSSDYPLIARILQGPCEQISKVFLMEKDQVEEVTYDVAQYIKFEMPVLKSFIQKLQEEEDREVEKLMRKYTVLRLMIRQRLEEIAETPETI.

The region spanning 176–264 (YNHKTSVFTP…SKVFLMEKDQ (89 aa)) is the Ras-associating domain. The SARAH domain maps to 272-319 (VAQYIKFEMPVLKSFIQKLQEEEDREVEKLMRKYTVLRLMIRQRLEEI).

In terms of assembly, interacts directly with activated KRAS in a GTP-dependent manner. Interacts (via SARAH domain) with STK3/MST2 and STK4/MST1. In terms of processing, phosphorylated by STK3/MST2 and STK4/MST1.

It localises to the nucleus. The protein resides in the cytoplasm. It is found in the chromosome. Its subcellular location is the centromere. The protein localises to the kinetochore. Potential tumor suppressor. Acts as a KRAS-specific effector protein. May promote apoptosis and cell cycle arrest. Stabilizes STK3/MST2 by protecting it from proteasomal degradation. This is Ras association domain-containing protein 2 (Rassf2) from Mus musculus (Mouse).